A 221-amino-acid chain; its full sequence is Transcription factor bHLH126 (221 aa).

Disordered regions lie at residues 1 to 46 (MDPY…KKLL) and 104 to 132 (RRDE…VGKS). A bHLH domain is found at 42–94 (KKKLLHRDIERQRRQEMATLFATLRTHLPLKYIKGKRAVSDHVNGAVNFIKDT).

Homodimer.

It is found in the nucleus. This Arabidopsis thaliana (Mouse-ear cress) protein is Transcription factor bHLH126 (BHLH126).